A 346-amino-acid polypeptide reads, in one-letter code: MSKLTIAIDAMGGDVGPHIPILAALKSLQLHPNLHIIIVGNRTQLLPVLKKYQLSEHARLSLIHTDNEISMEVNPVYALRHRSDSSMHIALKLVSQGKVDACVSAGNTGALMLLAKQALKTLPGISRPALISSLPNMHLGHTYMLDLGANLQCDSHTLFNFAVMGSVLCEKVDQINSPRVSILNVGKEKNKGGDVLQHCAELLKQTKHINYAGFVEANELFTCRSNIIVTDGFSGNIALKSCEGMGRVFSEQLDKAINSSLYSKLLGKLLRPILKKQLKHLHPDMYNGASLIGLRGIVVKSHGSANEIAFTCAIEHAIQETQWQIPASISKKLETVLSERDDLSHE.

It belongs to the PlsX family. As to quaternary structure, homodimer. Probably interacts with PlsY.

It is found in the cytoplasm. The catalysed reaction is a fatty acyl-[ACP] + phosphate = an acyl phosphate + holo-[ACP]. The protein operates within lipid metabolism; phospholipid metabolism. Its function is as follows. Catalyzes the reversible formation of acyl-phosphate (acyl-PO(4)) from acyl-[acyl-carrier-protein] (acyl-ACP). This enzyme utilizes acyl-ACP as fatty acyl donor, but not acyl-CoA. The polypeptide is Phosphate acyltransferase (Psychromonas ingrahamii (strain DSM 17664 / CCUG 51855 / 37)).